We begin with the raw amino-acid sequence, 628 residues long: Very-long-chain aldehyde decarbonylase GL1-2 (628 aa).

The next 5 membrane-spanning stretches (helical) occupy residues 37-57 (GAAP…ARGL), 131-151 (GWAI…YWAH), 191-211 (VVIG…VGLV), 299-319 (DFVF…PFVL), and 331-351 (FVLL…WCCS). Positions 137 to 277 (LLHVLVAEPL…MPIFDLLGGT (141 aa)) constitute a Fatty acid hydroxylase domain.

The protein belongs to the sterol desaturase family. As to quaternary structure, homodimer.

It localises to the endoplasmic reticulum membrane. It catalyses the reaction a long-chain fatty aldehyde + 2 NADPH + O2 + H(+) = a long-chain alkane + formate + 2 NADP(+) + H2O. In terms of biological role, aldehyde decarbonylase involved in the conversion of aldehydes to alkanes. Core component of a very-long-chain alkane synthesis complex. The protein is Very-long-chain aldehyde decarbonylase GL1-2 of Oryza sativa subsp. indica (Rice).